A 372-amino-acid chain; its full sequence is Small ribosomal subunit protein mS77 (rPPR2) (372 aa).

A mitochondrion-targeting transit peptide spans 1–28; that stretch reads MKSFLLSRQAIHRISLLSSKTPTFCRNF. The disordered stretch occupies residues 240–265; that stretch reads DNSIRESETVDGEVEEEGFVPSDEVE. Residues 248–257 are compositionally biased toward acidic residues; that stretch reads TVDGEVEEEG.

Component of the mitochondrial ribosome small subunit.

It localises to the mitochondrion. In terms of biological role, required for karyogamy during female gametophyte development, when the two polar nuclei fuse to form the diploid central cell nucleus. In Arabidopsis thaliana (Mouse-ear cress), this protein is Small ribosomal subunit protein mS77 (rPPR2).